Reading from the N-terminus, the 228-residue chain is 2,3-bisphosphoglycerate-dependent phosphoglycerate mutase (228 aa).

Residues 8–15, 21–22, arginine 60, 87–90, lysine 98, 114–115, and 180–181 each bind substrate; these read RHGQSAWN, TG, ERHY, RR, and GN. Histidine 9 acts as the Tele-phosphohistidine intermediate in catalysis. The active-site Proton donor/acceptor is glutamate 87.

It belongs to the phosphoglycerate mutase family. BPG-dependent PGAM subfamily. As to quaternary structure, homodimer.

The catalysed reaction is (2R)-2-phosphoglycerate = (2R)-3-phosphoglycerate. It participates in carbohydrate degradation; glycolysis; pyruvate from D-glyceraldehyde 3-phosphate: step 3/5. Functionally, catalyzes the interconversion of 2-phosphoglycerate and 3-phosphoglycerate. In Rhizorhabdus wittichii (strain DSM 6014 / CCUG 31198 / JCM 15750 / NBRC 105917 / EY 4224 / RW1) (Sphingomonas wittichii), this protein is 2,3-bisphosphoglycerate-dependent phosphoglycerate mutase.